Consider the following 191-residue polypeptide: Molybdenum cofactor guanylyltransferase (191 aa).

Residues 13–15 (LAG), K26, D72, and D102 contribute to the GTP site. Residue D102 participates in Mg(2+) binding.

The protein belongs to the MobA family. As to quaternary structure, monomer. The cofactor is Mg(2+).

It localises to the cytoplasm. It carries out the reaction Mo-molybdopterin + GTP + H(+) = Mo-molybdopterin guanine dinucleotide + diphosphate. In terms of biological role, transfers a GMP moiety from GTP to Mo-molybdopterin (Mo-MPT) cofactor (Moco or molybdenum cofactor) to form Mo-molybdopterin guanine dinucleotide (Mo-MGD) cofactor. The sequence is that of Molybdenum cofactor guanylyltransferase from Pseudomonas putida (strain GB-1).